The chain runs to 217 residues: Small ribosomal subunit protein uS3c (217 aa).

Residues 43-117 form the KH type-2 domain; it reads IKNYVQKNRK…KLNIAITRIA (75 aa).

This sequence belongs to the universal ribosomal protein uS3 family. In terms of assembly, part of the 30S ribosomal subunit.

Its subcellular location is the plastid. It localises to the chloroplast. The polypeptide is Small ribosomal subunit protein uS3c (rps3) (Ranunculus macranthus (Large buttercup)).